Consider the following 89-residue polypeptide: Small ribosomal subunit protein uS15 (89 aa).

A disordered region spans residues 1-25; that stretch reads MSLDTTEKQQLINTHQTHGTDTGSA. A compositionally biased stretch (polar residues) spans 8 to 25; the sequence is KQQLINTHQTHGTDTGSA.

It belongs to the universal ribosomal protein uS15 family. As to quaternary structure, part of the 30S ribosomal subunit. Forms a bridge to the 50S subunit in the 70S ribosome, contacting the 23S rRNA.

One of the primary rRNA binding proteins, it binds directly to 16S rRNA where it helps nucleate assembly of the platform of the 30S subunit by binding and bridging several RNA helices of the 16S rRNA. Its function is as follows. Forms an intersubunit bridge (bridge B4) with the 23S rRNA of the 50S subunit in the ribosome. This is Small ribosomal subunit protein uS15 from Synechococcus sp. (strain CC9902).